The sequence spans 234 residues: Purine nucleoside phosphorylase DeoD-type (234 aa).

Residue His4 participates in a purine D-ribonucleoside binding. Residues Gly20, Arg24, Arg43, and 87 to 90 (RVGT) each bind phosphate. Residues Glu162, 178 to 180 (EME), and 202 to 203 (SD) contribute to the a purine D-ribonucleoside site. Asp203 acts as the Proton donor in catalysis.

This sequence belongs to the PNP/UDP phosphorylase family. As to quaternary structure, homohexamer; trimer of homodimers.

The enzyme catalyses a purine D-ribonucleoside + phosphate = a purine nucleobase + alpha-D-ribose 1-phosphate. The catalysed reaction is a purine 2'-deoxy-D-ribonucleoside + phosphate = a purine nucleobase + 2-deoxy-alpha-D-ribose 1-phosphate. Catalyzes the reversible phosphorolytic breakdown of the N-glycosidic bond in the beta-(deoxy)ribonucleoside molecules, with the formation of the corresponding free purine bases and pentose-1-phosphate. The protein is Purine nucleoside phosphorylase DeoD-type of Anoxybacillus flavithermus (strain DSM 21510 / WK1).